The sequence spans 219 residues: UPF0173 metal-dependent hydrolase Mhun_1705 (219 aa).

It belongs to the UPF0173 family.

The sequence is that of UPF0173 metal-dependent hydrolase Mhun_1705 from Methanospirillum hungatei JF-1 (strain ATCC 27890 / DSM 864 / NBRC 100397 / JF-1).